Here is a 291-residue protein sequence, read N- to C-terminus: Small ribosomal subunit biogenesis GTPase RsgA (291 aa).

The CP-type G domain maps to 63 to 221; it reads QNELKRPPVS…VADTPGFSAL (159 aa). GTP-binding positions include 112–115 and 164–172; these read TKKD and GQSGVGKST. Residues C245, C250, H252, and C258 each coordinate Zn(2+).

Belongs to the TRAFAC class YlqF/YawG GTPase family. RsgA subfamily. In terms of assembly, monomer. Associates with 30S ribosomal subunit, binds 16S rRNA. Requires Zn(2+) as cofactor.

It is found in the cytoplasm. One of several proteins that assist in the late maturation steps of the functional core of the 30S ribosomal subunit. Helps release RbfA from mature subunits. May play a role in the assembly of ribosomal proteins into the subunit. Circularly permuted GTPase that catalyzes slow GTP hydrolysis, GTPase activity is stimulated by the 30S ribosomal subunit. The polypeptide is Small ribosomal subunit biogenesis GTPase RsgA (Staphylococcus carnosus (strain TM300)).